Reading from the N-terminus, the 248-residue chain is Anamorsin homolog (248 aa).

The tract at residues 4–129 (FKGLQKTLYI…ETGSSARLSF (126 aa)) is N-terminal SAM-like domain. Residues 130 to 161 (AKKDASALNVWKISGDDEELIDEEDLLDEEDK) are linker. Positions 172, 181, 184, and 186 each coordinate [2Fe-2S] cluster. The fe-S binding site A stretch occupies residues 172 to 186 (CSTTGKRKACKNCSC). Residues Cys-209, Cys-212, Cys-220, and Cys-223 each coordinate [4Fe-4S] cluster. Short sequence motifs (cx2C motif) lie at residues 209–212 (CGNC) and 220–223 (CSTC). Residues 209–223 (CGNCYLGDAFRCSTC) are fe-S binding site B.

This sequence belongs to the anamorsin family. In terms of assembly, monomer. It depends on [2Fe-2S] cluster as a cofactor. [4Fe-4S] cluster is required as a cofactor.

Its subcellular location is the cytoplasm. The protein resides in the mitochondrion intermembrane space. Functionally, component of the cytosolic iron-sulfur (Fe-S) protein assembly (CIA) machinery. Required for the maturation of extramitochondrial Fe-S proteins. Part of an electron transfer chain functioning in an early step of cytosolic Fe-S biogenesis, facilitating the de novo assembly of a [4Fe-4S] cluster on the cytosolic Fe-S scaffold complex. Electrons are transferred from NADPH via a FAD- and FMN-containing diflavin oxidoreductase. Together with the diflavin oxidoreductase, also required for the assembly of the diferric tyrosyl radical cofactor of ribonucleotide reductase (RNR), probably by providing electrons for reduction during radical cofactor maturation in the catalytic small subunit. In Drosophila ananassae (Fruit fly), this protein is Anamorsin homolog.